The primary structure comprises 182 residues: UPF0254 protein MK0012 (182 aa).

This sequence belongs to the UPF0254 family.

In Methanopyrus kandleri (strain AV19 / DSM 6324 / JCM 9639 / NBRC 100938), this protein is UPF0254 protein MK0012.